A 384-amino-acid chain; its full sequence is DNA dC-&gt;dU-editing enzyme APOBEC-3G (384 aa).

The interval 1–60 (MKPHFRNPVERMYQDTFSDNFYNRPILSRRNTVWLCYEVKTKGPSRPPLDAKIFRGQVYS) is essential for cytoplasmic localization. CMP/dCMP-type deaminase domains lie at 29-138 (RRNT…LRSL) and 214-328 (GRHE…LRTL). Position 32 is a phosphothreonine; by PKA (Thr-32). Residues His-65, Cys-97, and Cys-100 each contribute to the Zn(2+) site. Positions 209-336 (ELWVRGRHET…TLAKAGAEIS (128 aa)) are necessary for homooligomerization. The tract at residues 213–215 (RGR) is interaction with DNA. Phosphothreonine; by PKA and CAMK2 is present on Thr-218. His-257 contacts Zn(2+). Catalysis depends on Glu-259, which acts as the Proton donor. Cys-288 and Cys-291 together coordinate Zn(2+). Positions 313-320 (RIYDDQGR) are interaction with DNA.

This sequence belongs to the cytidine and deoxycytidylate deaminase family. As to quaternary structure, homodimer. Homooligomer. Can bind RNA to form ribonucleoprotein complexes of high-molecular-mass (HMM) or low-molecular-mass (LMM). HMM is inactive and heterogeneous in protein composition because of binding nonselectively to cellular RNAs, which in turn are associated with variety of cellular proteins. The LMM form which is enzymatically active has few or no RNAs associated. Its ability to form homooligomer is distinct from its ability to assemble into HMM. Interacts with APOBEC3B, APOBEC3F, MOV10, AGO2, EIF4E, EIF4ENIF1, DCP2 and DDX6 in an RNA-dependent manner. Interacts with AGO1, AGO3 and PKA/PRKACA. Zn(2+) is required as a cofactor.

The protein resides in the cytoplasm. It is found in the nucleus. Its subcellular location is the P-body. The enzyme catalyses a 2'-deoxycytidine in single-stranded DNA + H2O + H(+) = a 2'-deoxyuridine in single-stranded DNA + NH4(+). DNA deaminase (cytidine deaminase) which acts as an inhibitor of retrovirus replication and retrotransposon mobility via deaminase-dependent and -independent mechanisms. After the penetration of retroviral nucleocapsids into target cells of infection and the initiation of reverse transcription, it can induce the conversion of cytosine to uracil in the minus-sense single-strand viral DNA, leading to G-to-A hypermutations in the subsequent plus-strand viral DNA. The resultant detrimental levels of mutations in the proviral genome, along with a deamination-independent mechanism that works prior to the proviral integration, together exert efficient antiretroviral effects in infected target cells. Selectively targets single-stranded DNA and does not deaminate double-stranded DNA or single- or double-stranded RNA. May inhibit the mobility of LTR retrotransposons. This Pan paniscus (Pygmy chimpanzee) protein is DNA dC-&gt;dU-editing enzyme APOBEC-3G (APOBEC3G).